A 648-amino-acid chain; its full sequence is Shugoshin (648 aa).

Coiled coils occupy residues 95–122 (LMIK…RLSV) and 208–273 (DDRA…KDEA). Disordered stretches follow at residues 188-239 (KVVG…RSSR), 262-334 (EADK…QEDA), 367-443 (VYRD…RPRR), 483-518 (TNRK…AAED), and 628-648 (HRAR…KVST). Composition is skewed to basic and acidic residues over residues 200-217 (VRGE…HQEA) and 262-273 (EADKSRSAKDEA). Over residues 306–315 (ASGTLTQSNE) the composition is skewed to polar residues. Basic and acidic residues-rich tracts occupy residues 424 to 440 (IVVD…DATR) and 490 to 509 (QREG…HEQD).

Belongs to the shugoshin family.

The protein localises to the nucleus. It localises to the chromosome. The protein resides in the centromere. In terms of biological role, plays a central role in chromosome cohesion during cell division by preventing premature dissociation of cohesin complex from centromeres after prophase, when most of cohesin complex dissociates from chromosomes arms. May act by protecting RAD21 and or REC8 from cleavage by ESP1/separase. The polypeptide is Shugoshin (SGO1) (Eremothecium gossypii (strain ATCC 10895 / CBS 109.51 / FGSC 9923 / NRRL Y-1056) (Yeast)).